A 132-amino-acid polypeptide reads, in one-letter code: Small ribosomal subunit protein uS8 (132 aa).

Belongs to the universal ribosomal protein uS8 family. In terms of assembly, part of the 30S ribosomal subunit. Contacts proteins S5 and S12.

In terms of biological role, one of the primary rRNA binding proteins, it binds directly to 16S rRNA central domain where it helps coordinate assembly of the platform of the 30S subunit. This Lactobacillus acidophilus (strain ATCC 700396 / NCK56 / N2 / NCFM) protein is Small ribosomal subunit protein uS8.